The chain runs to 456 residues: Chromosomal replication initiator protein DnaA (456 aa).

The interval 1 to 83 (MKLKILHFTS…DAFEEESNNG (83 aa)) is domain I, interacts with DnaA modulators. Residues 83 to 116 (GVRPEIHIKVKEKKENVKSLKNNKSMLYFNTNGL) are domain II. The tract at residues 117-331 (SLNPFYTFEN…GILSTINAHI (215 aa)) is domain III, AAA+ region. Residues Gly161, Gly163, Lys164, and Thr165 each coordinate ATP. Residues 332–456 (NLSPESSSLK…SKIQQSLDSV (125 aa)) are domain IV, binds dsDNA.

Belongs to the DnaA family. As to quaternary structure, oligomerizes as a right-handed, spiral filament on DNA at oriC.

It is found in the cytoplasm. Plays an essential role in the initiation and regulation of chromosomal replication. ATP-DnaA binds to the origin of replication (oriC) to initiate formation of the DNA replication initiation complex once per cell cycle. Binds the DnaA box (a 9 base pair repeat at the origin) and separates the double-stranded (ds)DNA. Forms a right-handed helical filament on oriC DNA; dsDNA binds to the exterior of the filament while single-stranded (ss)DNA is stabiized in the filament's interior. The ATP-DnaA-oriC complex binds and stabilizes one strand of the AT-rich DNA unwinding element (DUE), permitting loading of DNA polymerase. After initiation quickly degrades to an ADP-DnaA complex that is not apt for DNA replication. Binds acidic phospholipids. This is Chromosomal replication initiator protein DnaA from Helicobacter hepaticus (strain ATCC 51449 / 3B1).